The sequence spans 332 residues: GDP-mannose transporter 2 (332 aa).

At 1–12 the chain is on the cytoplasmic side; that stretch reads MSSLKVSQQDKK. Residues 13 to 33 traverse the membrane as a helical segment; sequence WVNSGSVAILAYCASSILMTI. The Lumenal segment spans residues 34–47; that stretch reads TNKVVMSDRTFNMN. A helical membrane pass occupies residues 48–68; the sequence is FLLLFIQSLVCVITLLVLKVL. Topologically, residues 69 to 84 are cytoplasmic; sequence GSVNFRSFNKTDARNW. A helical membrane pass occupies residues 85 to 105; the sequence is FPISICLVLMIFTSSKSLQYL. The Lumenal segment spans residues 106–108; sequence SVP. Residues 109-129 traverse the membrane as a helical segment; sequence VYTIFKNLTIIVIAYGEVLFF. The Cytoplasmic segment spans residues 130–131; it reads GS. A helical transmembrane segment spans residues 132 to 152; sequence SVGNMELGSFALMIVSSLIAA. Over 153-174 the chain is Lumenal; sequence HGDYLHSVERLKKMLGPNVSFS. Asn170 is a glycosylation site (N-linked (GlcNAc...) asparagine). A helical transmembrane segment spans residues 175 to 195; sequence FIVNIGYFWIAANCFASALFV. The Cytoplasmic portion of the chain corresponds to 196 to 211; the sequence is LLMRKRIQVTNFKDFD. The helical transmembrane segment at 212–232 threads the bilayer; that stretch reads TMFYNNVLSLPLLLLGSYLFE. Over 233–248 the chain is Lumenal; that stretch reads DWSQENLLPHVDIDNL. Asn247 is a glycosylation site (N-linked (GlcNAc...) asparagine). Residues 249–269 traverse the membrane as a helical segment; the sequence is STMIISGLASVAISYCSGWCV. The Cytoplasmic portion of the chain corresponds to 270–274; the sequence is RVTSS. The chain crosses the membrane as a helical span at residues 275–295; it reads TTYSMVGALNKLPIALTGFLF. The Lumenal segment spans residues 296-300; sequence NDAAR. Residues 301–321 traverse the membrane as a helical segment; it reads NLSSAASILLGFASGIIYAVA. The Cytoplasmic portion of the chain corresponds to 322–332; that stretch reads KQKKLQNSEKI.

The protein belongs to the TPT transporter family. SLC35D subfamily. In terms of assembly, homooligomer.

It localises to the golgi apparatus membrane. The protein resides in the cytoplasmic vesicle membrane. The protein localises to the endoplasmic reticulum membrane. In terms of biological role, involved in the import of GDP-mannose from the cytoplasm into the Golgi lumen. The chain is GDP-mannose transporter 2 (VRG4-2) from Vanderwaltozyma polyspora (strain ATCC 22028 / DSM 70294 / BCRC 21397 / CBS 2163 / NBRC 10782 / NRRL Y-8283 / UCD 57-17) (Kluyveromyces polysporus).